An 81-amino-acid polypeptide reads, in one-letter code: Putative membrane protein insertion efficiency factor (81 aa).

Belongs to the UPF0161 family.

It localises to the cell inner membrane. In terms of biological role, could be involved in insertion of integral membrane proteins into the membrane. The polypeptide is Putative membrane protein insertion efficiency factor (Pseudomonas savastanoi pv. phaseolicola (strain 1448A / Race 6) (Pseudomonas syringae pv. phaseolicola (strain 1448A / Race 6))).